A 1352-amino-acid chain; its full sequence is Ubiquitin carboxyl-terminal hydrolase 31 (1352 aa).

The segment covering 1-16 has biased composition (low complexity); it reads MSKVTAPGSGPPAAAS. 2 disordered regions span residues 1–62 and 79–119; these read MSKV…RSVG and SSEG…PPAC. A compositionally biased stretch (gly residues) spans 32 to 43; it reads RAGGGGAGGPGA. Over residues 44–62 the composition is skewed to low complexity; it reads SGPAAPSSPSSPSSARSVG. The span at 95 to 117 shows a compositional bias: pro residues; the sequence is PPGPAAAPTPPPCPPPPASPAPP. Positions 128–765 constitute a USP domain; the sequence is AGLRNHGNTC…TAYILFYQRR (638 aa). The active-site Nucleophile is the Cys137. The segment at 162–185 is disordered; the sequence is RAGRPEPSPDPEQPAGRGAQGQGE. His723 functions as the Proton acceptor in the catalytic mechanism. 3 disordered regions span residues 812–835, 919–939, and 951–1352; these read LASL…FSTR, SSSY…AVGR, and DESD…QKPQ. The span at 958–970 shows a compositional bias: polar residues; the sequence is LNSSVVDTQSKHS. 4 stretches are compositionally biased toward low complexity: residues 992-1001, 1051-1070, 1078-1089, and 1101-1138; these read VDQSDSVDSS, SSLS…SLKP, DSSSRGSGRHSS, and PKSQ…GPAT. The span at 1148-1159 shows a compositional bias: basic and acidic residues; that stretch reads RTSDHSLSREGS. The span at 1160–1181 shows a compositional bias: polar residues; it reads RQSLGSDRASATSTSKPNSPRV. Over residues 1198–1210 the composition is skewed to low complexity; it reads SSSMASLRSPSTS. 2 stretches are compositionally biased toward basic and acidic residues: residues 1215–1225 and 1234–1243; these read LKRDSKSEDKG and RQKETRRSTD. Low complexity predominate over residues 1251–1264; that stretch reads SKKAGGSSVKSVCK. Position 1264 is an N6-acetyllysine (Lys1264). Composition is skewed to polar residues over residues 1278-1290 and 1341-1352; these read PASQ…TTGK and MQTSARPSQKPQ.

It belongs to the peptidase C19 family. In terms of processing, acetylated at Lys-1264. Acetylation decreases activity. Deacetylated by SIRT1. As to expression, widely expressed.

It catalyses the reaction Thiol-dependent hydrolysis of ester, thioester, amide, peptide and isopeptide bonds formed by the C-terminal Gly of ubiquitin (a 76-residue protein attached to proteins as an intracellular targeting signal).. Its function is as follows. Deubiquitinase that recognizes and hydrolyzes the peptide bond at the C-terminal Gly of ubiquitin. May play a role in the regulation of NF-kappa-B signaling pathway by deubiquitinating TRAF2. (Microbial infection) Plays a positive role in foot-and-mouth disease and classical swine fever viral infection. Mechanistically, associates with internal ribosomal entry site (IRES) element within the 5'-untranslated region of viral genomes to promote translation of the virus-encoded polyprotein. This chain is Ubiquitin carboxyl-terminal hydrolase 31 (USP31), found in Homo sapiens (Human).